We begin with the raw amino-acid sequence, 207 residues long: Dephospho-CoA kinase (207 aa).

Residues 10–207 enclose the DPCK domain; that stretch reads ILGLTGGIGS…FYLTLSGGQS (198 aa). An ATP-binding site is contributed by 18–23; it reads GSGKSA.

This sequence belongs to the CoaE family.

It localises to the cytoplasm. It carries out the reaction 3'-dephospho-CoA + ATP = ADP + CoA + H(+). The protein operates within cofactor biosynthesis; coenzyme A biosynthesis; CoA from (R)-pantothenate: step 5/5. Functionally, catalyzes the phosphorylation of the 3'-hydroxyl group of dephosphocoenzyme A to form coenzyme A. The polypeptide is Dephospho-CoA kinase (Pseudomonas fluorescens (strain Pf0-1)).